Reading from the N-terminus, the 1436-residue chain is MAP kinase kinase kinase win1 (1436 aa).

The interval 56-85 (LELPNNGKEENHRRPSVARSSSDRSKASAK) is disordered. The span at 76–85 (SSDRSKASAK) shows a compositional bias: basic and acidic residues. S224 is subject to Phosphoserine. T226 is modified (phosphothreonine). The interval 282-1123 (EDSDLDSETS…SNITIRWQQG (842 aa)) is interaction with tea4. Positions 1120-1406 (WQQGGLIGSG…AAELLMDPWV (287 aa)) constitute a Protein kinase domain. Residues 1126-1134 (IGSGSFGTV) and K1149 contribute to the ATP site. The active-site Proton acceptor is the D1244.

Belongs to the protein kinase superfamily. STE Ser/Thr protein kinase family. MAP kinase kinase kinase subfamily. As to quaternary structure, interacts with tea4.

The catalysed reaction is L-seryl-[protein] + ATP = O-phospho-L-seryl-[protein] + ADP + H(+). The enzyme catalyses L-threonyl-[protein] + ATP = O-phospho-L-threonyl-[protein] + ADP + H(+). Its function is as follows. Involved in a signal transduction pathway that is activated by changes in the osmolarity of the extracellular environment. Activates the wis1 MAP kinase kinase by phosphorylation. This Schizosaccharomyces pombe (strain 972 / ATCC 24843) (Fission yeast) protein is MAP kinase kinase kinase win1 (win1).